A 640-amino-acid chain; its full sequence is F-box only protein 43 (640 aa).

Threonine 176 is subject to Phosphothreonine. The residue at position 275 (serine 275) is a Phosphoserine. Residues 328-354 (LQEQGQSEDEMQTVHPNSDSGVLESLQ) are disordered. The F-box domain maps to 423 to 480 (MGIEQLDILTELQYRNLKHILAMVLESLTSESLYSAWNVSRNWREIVAQDKKANRRRK). A ZBR-type zinc finger spans residues 568–616 (ALKPCPRCQSPAKYQPHKKRGLCSRLACGFDFCVLCLCAYHGSEDCRRG). Positions 572, 575, 590, 595, 600, 603, 608, and 613 each coordinate Zn(2+). The tract at residues 615 to 640 (RGSAKARGSKDVLPGSAQSKRNLKRL) is disordered.

As to quaternary structure, part of a SCF (SKP1-cullin-F-box) protein ligase complex. Interaction with SKP1 does not occur. Interacts with ANAPC2; the interaction is direct, ANAPC4, CDC16, CDC23; the interaction is direct, ANAPC10; the interaction is direct and CDC26, during spermatogenesis. Interacts with CDC20. Phosphorylated on Thr-176 and Ser-275 in response to calcium, which is a prerequisite for ubiquitination and proteasomal degradation. Post-translationally, ubiquitinated in response to calcium, which promotes proteasomal degradation. Present in testis and ovary (at protein level). Expression is high in immature oocytes, and diminishes after oocyte activation. Expressed post-meiotically in spermatids and sperm.

The protein operates within protein modification; protein ubiquitination. In terms of biological role, required to establish and maintain the arrest of oocytes at the second meiotic metaphase until fertilization. Acts by inhibiting the anaphase-promoting complex/cyclosome (APC/C) ubiquitin ligase. Probably recognizes and binds to some phosphorylated proteins and promotes their ubiquitination and degradation. Plays a vital role in modulating the ubiquitilation of CCNB1 and CDK1 during gametogenesis. The chain is F-box only protein 43 (Fbxo43) from Mus musculus (Mouse).